A 222-amino-acid chain; its full sequence is Glutathione S-transferase A4 (222 aa).

At Met1 the chain carries N-acetylmethionine. Positions 3–83 (AKPKLYYFNG…YLAAKYNLYG (81 aa)) constitute a GST N-terminal domain. Residues Tyr9, 53 to 55 (GQV), and 66 to 68 (TQT) contribute to the glutathione site. Residues 85 to 208 (DLKERVRIDM…QPGSQRKPPP (124 aa)) form the GST C-terminal domain.

It belongs to the GST superfamily. Alpha family. In terms of assembly, homodimer. The N-terminus is blocked.

Its subcellular location is the cytoplasm. The catalysed reaction is RX + glutathione = an S-substituted glutathione + a halide anion + H(+). Conjugation of reduced glutathione to a wide number of exogenous and endogenous hydrophobic electrophiles. This chain is Glutathione S-transferase A4 (Gsta4), found in Mus musculus (Mouse).